The sequence spans 255 residues: uncharacterized protein (255 aa).

Positions 42–67 (ACSGSPPEPGKGRPDTTPEQEVPVTA) are disordered.

This is an uncharacterized protein from Mycobacterium tuberculosis (strain CDC 1551 / Oshkosh).